A 745-amino-acid chain; its full sequence is Cysteine protease atg4 (745 aa).

3 stretches are compositionally biased toward low complexity: residues 29 to 42 (QQSY…APQQ), 52 to 64 (SPTS…SSST), and 194 to 215 (NNNS…NNNN). Disordered regions lie at residues 29–68 (QQSY…AMGN) and 192–215 (FQNN…NNNN). The active-site Nucleophile is the Cys262. 2 disordered regions span residues 344 to 363 (LNRG…KEEE) and 439 to 480 (QNNN…NGYN). The segment covering 439–477 (QNNNKNNNNNNPTTTTTTTTTATSSNNNNNQSPPSRVPN) has biased composition (low complexity). Active-site residues include Asp562 and His564. Positions 686–745 (HIPYNPNNNQNNNQNNNNNNNKNNNNNTNQQQTPNYPPKLNTYQPDFSSDGEIDDFTMVG) are disordered. Residues 688 to 719 (PYNPNNNQNNNQNNNNNNNKNNNNNTNQQQTP) show a composition bias toward low complexity. The span at 734–745 (SDGEIDDFTMVG) shows a compositional bias: acidic residues.

It belongs to the peptidase C54 family.

It is found in the cytoplasm. The catalysed reaction is [protein]-C-terminal L-amino acid-glycyl-phosphatidylethanolamide + H2O = [protein]-C-terminal L-amino acid-glycine + a 1,2-diacyl-sn-glycero-3-phosphoethanolamine. In terms of biological role, cysteine protease that plays a key role in autophagy by mediating both proteolytic activation and delipidation of ATG8 family proteins. The protease activity is required for proteolytic activation of ATG8 family proteins: cleaves the C-terminal amino acid of ATG8 proteins to reveal a C-terminal glycine. Exposure of the glycine at the C-terminus is essential for ATG8 proteins conjugation to phosphatidylethanolamine (PE) and insertion to membranes, which is necessary for autophagy. In addition to the protease activity, also mediates delipidation of PE-conjugated ATG8 proteins. In Dictyostelium discoideum (Social amoeba), this protein is Cysteine protease atg4 (atg4-1).